The chain runs to 601 residues: Jacalin-related lectin 3 (601 aa).

Jacalin-type lectin domains follow at residues 13–155 (PASL…HTQP), 240–382 (AKTY…HVME), and 438–583 (PSGP…HMQH).

Belongs to the jacalin lectin family.

This Arabidopsis thaliana (Mouse-ear cress) protein is Jacalin-related lectin 3 (JAL3).